We begin with the raw amino-acid sequence, 842 residues long: Protein P (842 aa).

The terminal protein domain (TP) stretch occupies residues 1–177 (MPLSYQHFRR…FCGSPYTWEQ (177 aa)). Residues 178–345 (DLQHGAFLDG…YCLSHLVNLL (168 aa)) are spacer. The tract at residues 184-238 (FLDGPSRVGKEPFRQQSSRIPSRSPVGPSIQSKYQQSRLGLQSQKGPLARGQQGR) is disordered. Residues 197–208 (RQQSSRIPSRSP) show a composition bias toward low complexity. Positions 212–228 (SIQSKYQQSRLGLQSQK) are enriched in polar residues. The segment at 346 to 689 (QDWGPCTEHG…YMNLYPVARQ (344 aa)) is polymerase/reverse transcriptase domain (RT). Residues 356 to 599 (EHHIRIPRTP…YSLNFMGYVI (244 aa)) enclose the Reverse transcriptase domain. Residues Asp-428, Asp-550, and Asp-551 each coordinate Mg(2+).

The protein belongs to the hepadnaviridae P protein family.

The catalysed reaction is DNA(n) + a 2'-deoxyribonucleoside 5'-triphosphate = DNA(n+1) + diphosphate. It carries out the reaction Endonucleolytic cleavage to 5'-phosphomonoester.. Activated by host HSP70 and HSP40 in vitro to be able to bind the epsilon loop of the pgRNA. Because deletion of the RNase H region renders the protein partly chaperone-independent, the chaperones may be needed indirectly to relieve occlusion of the RNA-binding site by this domain. Inhibited by several reverse-transcriptase inhibitors: Lamivudine, Adefovir and Entecavir. Multifunctional enzyme that converts the viral RNA genome into dsDNA in viral cytoplasmic capsids. This enzyme displays a DNA polymerase activity that can copy either DNA or RNA templates, and a ribonuclease H (RNase H) activity that cleaves the RNA strand of RNA-DNA heteroduplexes in a partially processive 3'- to 5'-endonucleasic mode. Neo-synthesized pregenomic RNA (pgRNA) are encapsidated together with the P protein, and reverse-transcribed inside the nucleocapsid. Initiation of reverse-transcription occurs first by binding the epsilon loop on the pgRNA genome, and is initiated by protein priming, thereby the 5'-end of (-)DNA is covalently linked to P protein. Partial (+)DNA is synthesized from the (-)DNA template and generates the relaxed circular DNA (RC-DNA) genome. After budding and infection, the RC-DNA migrates in the nucleus, and is converted into a plasmid-like covalently closed circular DNA (cccDNA). The activity of P protein does not seem to be necessary for cccDNA generation, and is presumably released from (+)DNA by host nuclear DNA repair machinery. The sequence is that of Protein P from Hepatitis B virus genotype G (isolate IG29227/2000) (HBV-G).